Consider the following 166-residue polypeptide: UPF0303 protein Avin_29320 (166 aa).

The protein belongs to the UPF0303 family.

The polypeptide is UPF0303 protein Avin_29320 (Azotobacter vinelandii (strain DJ / ATCC BAA-1303)).